We begin with the raw amino-acid sequence, 490 residues long: Lysine--tRNA ligase (490 aa).

Residues Glu398 and Glu405 each coordinate Mg(2+).

This sequence belongs to the class-II aminoacyl-tRNA synthetase family. As to quaternary structure, homodimer. It depends on Mg(2+) as a cofactor.

The protein resides in the cytoplasm. The enzyme catalyses tRNA(Lys) + L-lysine + ATP = L-lysyl-tRNA(Lys) + AMP + diphosphate. This is Lysine--tRNA ligase from Metamycoplasma arthritidis (strain 158L3-1) (Mycoplasma arthritidis).